We begin with the raw amino-acid sequence, 586 residues long: IASRMSFSSLKRKQPKTFTVRIVTMDAEMEFNCEMKWKGKDLFDLVCRTLGLRETWFFGLQYTIKDTVAWLKMDKKVLDHDVSKEEPVTFHFLAKFYPENAEEELVQEITQHLFFLQVKKQILDEKVYCPPEASVLLASYAVQAKYGDYDPSVHKRGFLAQEELLPKRVINLYQMTPEMWEERITAWYAEHRGRARDEAEMEYLKIAQDLEMYGVNYFTIRNKKGTELLLGVDALGLHIYDPENRLTPKISFPWNEIRNISYSDKEFTIKPLDKKIDVFKFNSSKLRVNKLILQLCIGNHDLFMRRRKADSLEVQQMKAQAREEKARKQMERQRLAREKQMREEAERSRDEPERRVLHMKEEATMANEALMRSEETADLLAEKAQITEEEAKLLAQKAAEAEQEMQRIKATAIRTEEEKRLMEQKVLEAEVLALKMAEESERRAKEADQLKQDLQEAREAERRAKQKLLEIATKPTYPPMNPIPAPLPPDIPSFDIIGDSLSFDFKDTDMKRLSMEIEKEKVEYMEKSKHLQEQLNELKTEIEALKLKERETALDILHSEHSDSGTSSKHNTIKKPQAQGRRPICI.

Phosphoserine is present on Ser9. Residues 18–307 (FTVRIVTMDA…GNHDLFMRRR (290 aa)) form the FERM domain. Residues 325-354 (KARKQMERQRLAREKQMREEAERSRDEPER) are disordered. Ser514 carries the phosphoserine; by PAK modification. A disordered region spans residues 557 to 586 (LHSEHSDSGTSSKHNTIKKPQAQGRRPICI).

As to quaternary structure, interacts with NHERF1, HGS and AGAP2. Interacts with SGSM3. Interacts (via FERM domain) with MPP1. Interacts with LAYN and WWC1. Interacts with the CUL4A-RBX1-DDB1-VprBP/DCAF1 E3 ubiquitin-protein ligase complex. The unphosphorylated form interacts (via FERM domain) with VPRBP/DCAF1. Interacts (via FERM domain) with NOP53; the interaction is direct. Interacts with SCHIP1; the interaction is direct. Post-translationally, ubiquitinated by the CUL4A-RBX1-DDB1-DCAF1/VprBP E3 ubiquitin-protein ligase complex for ubiquitination and subsequent proteasome-dependent degradation. Phosphorylation of Ser-514 inhibits nuclear localization by disrupting the intramolecular association of the FERM domain with the C-terminal tail. The dephosphorylation of Ser-514 favors the interaction with NOP53.

It localises to the cell membrane. It is found in the cell projection. Its subcellular location is the cytoplasm. The protein localises to the cytoskeleton. The protein resides in the nucleus. Probable regulator of the Hippo/SWH (Sav/Wts/Hpo) signaling pathway, a signaling pathway that plays a pivotal role in tumor suppression by restricting proliferation and promoting apoptosis. Along with WWC1 can synergistically induce the phosphorylation of LATS1 and LATS2 and can probably function in the regulation of the Hippo/SWH (Sav/Wts/Hpo) signaling pathway. May act as a membrane stabilizing protein. May inhibit PI3 kinase by binding to AGAP2 and impairing its stimulating activity. Suppresses cell proliferation and tumorigenesis by inhibiting the CUL4A-RBX1-DDB1-VprBP/DCAF1 E3 ubiquitin-protein ligase complex Plays a role in lens development and is required for complete fiber cell terminal differentiation, maintenance of cell polarity and separation of the lens vesicle from the corneal epithelium. This Rattus norvegicus (Rat) protein is Merlin (Nf2).